The following is a 699-amino-acid chain: Elongation factor G (699 aa).

The 283-residue stretch at 10 to 292 (NRTRNIGIMA…AVIDYLPSPT (283 aa)) folds into the tr-type G domain. Residues 19–26 (AHIDAGKT), 90–94 (DTPGH), and 144–147 (NKMD) contribute to the GTP site. The segment at 292–312 (TDVPAIRGEEDDGSEGSRSAS) is disordered.

It belongs to the TRAFAC class translation factor GTPase superfamily. Classic translation factor GTPase family. EF-G/EF-2 subfamily.

It is found in the cytoplasm. In terms of biological role, catalyzes the GTP-dependent ribosomal translocation step during translation elongation. During this step, the ribosome changes from the pre-translocational (PRE) to the post-translocational (POST) state as the newly formed A-site-bound peptidyl-tRNA and P-site-bound deacylated tRNA move to the P and E sites, respectively. Catalyzes the coordinated movement of the two tRNA molecules, the mRNA and conformational changes in the ribosome. In Coxiella burnetii (strain CbuG_Q212) (Coxiella burnetii (strain Q212)), this protein is Elongation factor G.